The chain runs to 354 residues: Ferrochelatase (354 aa).

Residues His214 and Glu295 each contribute to the Fe cation site.

It belongs to the ferrochelatase family.

The protein localises to the cytoplasm. It catalyses the reaction heme b + 2 H(+) = protoporphyrin IX + Fe(2+). The protein operates within porphyrin-containing compound metabolism; protoheme biosynthesis; protoheme from protoporphyrin-IX: step 1/1. Catalyzes the ferrous insertion into protoporphyrin IX. This is Ferrochelatase from Burkholderia lata (strain ATCC 17760 / DSM 23089 / LMG 22485 / NCIMB 9086 / R18194 / 383).